A 359-amino-acid chain; its full sequence is Epoxide hydrolase 4 (359 aa).

A helical; Signal-anchor for type II membrane protein membrane pass occupies residues 15–35; the sequence is ALLYWSLVYGYCGLCASVHLL. In terms of domain architecture, AB hydrolase-1 spans 92–337; it reads PLMLLLHGFP…ILSEGSHWLQ (246 aa). Asp-167 acts as the Nucleophile in catalysis. Tyr-279 serves as the catalytic Proton donor. Catalysis depends on His-334, which acts as the Proton acceptor.

Belongs to the AB hydrolase superfamily. Epoxide hydrolase family.

It localises to the membrane. This Mus musculus (Mouse) protein is Epoxide hydrolase 4 (Ephx4).